Reading from the N-terminus, the 257-residue chain is 1-(5-phosphoribosyl)-5-[(5-phosphoribosylamino)methylideneamino] imidazole-4-carboxamide isomerase (257 aa).

Catalysis depends on aspartate 8, which acts as the Proton acceptor. The active-site Proton donor is the aspartate 131.

The protein belongs to the HisA/HisF family.

Its subcellular location is the cytoplasm. The enzyme catalyses 1-(5-phospho-beta-D-ribosyl)-5-[(5-phospho-beta-D-ribosylamino)methylideneamino]imidazole-4-carboxamide = 5-[(5-phospho-1-deoxy-D-ribulos-1-ylimino)methylamino]-1-(5-phospho-beta-D-ribosyl)imidazole-4-carboxamide. The protein operates within amino-acid biosynthesis; L-histidine biosynthesis; L-histidine from 5-phospho-alpha-D-ribose 1-diphosphate: step 4/9. This chain is 1-(5-phosphoribosyl)-5-[(5-phosphoribosylamino)methylideneamino] imidazole-4-carboxamide isomerase, found in Nitrosospira multiformis (strain ATCC 25196 / NCIMB 11849 / C 71).